Reading from the N-terminus, the 121-residue chain is Ribonuclease P protein component (121 aa).

This sequence belongs to the RnpA family. As to quaternary structure, consists of a catalytic RNA component (M1 or rnpB) and a protein subunit.

It carries out the reaction Endonucleolytic cleavage of RNA, removing 5'-extranucleotides from tRNA precursor.. Functionally, RNaseP catalyzes the removal of the 5'-leader sequence from pre-tRNA to produce the mature 5'-terminus. It can also cleave other RNA substrates such as 4.5S RNA. The protein component plays an auxiliary but essential role in vivo by binding to the 5'-leader sequence and broadening the substrate specificity of the ribozyme. The polypeptide is Ribonuclease P protein component (Geobacillus kaustophilus (strain HTA426)).